The sequence spans 504 residues: MSATEDKKDPASMLAELKLDKDEGNKTPETKTPESNSAETKTTEEVKELKNPFTQKKEDVENDAAEEKTNEVNKDDAKDERENKDTNLIKSEYEVKVNLADLQADPNSPLYSVKSFDELGLSPELLKGIYAMKFQKPSKIQERALPLLLSNPPRNMIAQSQSGTGKTAAFSLTMLSRVDETQNVPQAICLAPSRELARQTLEVIQEMGKYTKITTQLIVPDSFEKNTKINANVVVGTPGTLLDLIRRKLIQLQNVKIFVLDEADNMLDKQGLGDQCIRVKKFLPKDTQLVLFSATFADAVKAYAQKVIPNANTLELQRNEVNVKAIKQLYMDCNDEAHKYEVLCELYGLLTIGSSIIFVAKKDTANLLYGKLKHEGHQVSILHSDLRTDERDRLIDDFREGRSKVLITTNVLARGIDIPSVSMVVNYDLPTLPNGMPDYATYVHRIGRTGRFGRTGVAISFVHDKKSFKILSAIQDYFKDIELTRVPTDDWDEVEDIVKKVLKQ.

3 stretches are compositionally biased toward basic and acidic residues: residues Met1–Pro10, Leu17–Thr32, and Lys41–Asp85. Residues Met1–Asp85 form a disordered region. A Q motif motif is present at residues Lys114–Glu142. A Helicase ATP-binding domain is found at Leu147 to Leu314. Position 160-167 (Ser160–Thr167) interacts with ATP. A DEAD box motif is present at residues Asp261–Asp264. In terms of domain architecture, Helicase C-terminal spans Ala325 to Leu502.

It belongs to the DEAD box helicase family. DDX19/DBP5 subfamily. As to quaternary structure, associates with the nuclear pore complex.

The protein resides in the cytoplasm. The protein localises to the nucleus. It is found in the nuclear pore complex. It localises to the nucleus membrane. The enzyme catalyses ATP + H2O = ADP + phosphate + H(+). Its function is as follows. ATP-dependent RNA helicase associated with the nuclear pore complex and essential for mRNA export from the nucleus. May participate in a terminal step of mRNA export through the removal of proteins that accompany mRNA through the nucleopore complex. May also be involved in early transcription. This chain is ATP-dependent RNA helicase DBP5 (DBP5), found in Candida glabrata (strain ATCC 2001 / BCRC 20586 / JCM 3761 / NBRC 0622 / NRRL Y-65 / CBS 138) (Yeast).